Reading from the N-terminus, the 475-residue chain is Actin-related protein 10 (475 aa).

This sequence belongs to the actin family.

It localises to the cytoplasm. The protein localises to the cytoskeleton. The chain is Actin-related protein 10 from Dictyostelium discoideum (Social amoeba).